The chain runs to 839 residues: DNA (cytosine-5)-methyltransferase CMT3 (839 aa).

2 disordered regions span residues 1-38 (MAPKRKRPATKDDTTKSIPKPKKRAPKRAKTVKEEPVT) and 51-86 (LDEPIPESEAKSTWPDRYKPIEVQPPKASSRKKTKD). The span at 19-30 (PKPKKRAPKRAK) shows a compositional bias: basic residues. A compositionally biased stretch (basic and acidic residues) spans 51-70 (LDEPIPESEAKSTWPDRYKP). A BAH domain is found at 108 to 227 (QIYELNDDAY…LPYDTFEAIQ (120 aa)). Positions 269-813 (ATLLDLYSGC…YALGTAFQGL (545 aa)) constitute an SAM-dependent MTase C5-type domain. The Chromo domain maps to 382–447 (FTVDKIVGIS…LGYKSGILPL (66 aa)). Cys460 is an active-site residue.

Belongs to the class I-like SAM-binding methyltransferase superfamily. C5-methyltransferase family. As to quaternary structure, homodimer. Interacts with HP1 and, through its chromodomain, with the N-terminal tail of histone H3 doubly methylated at 'Lys-9' and 'Lys-27'. Binds to JMJ24. In terms of processing, ubiquitinated by JMJ24, subsequently beingargeted to proteasomal degradation thus initiating the destabilization of the heterochromatic state of endogenous silenced loci.

The protein resides in the nucleus. The catalysed reaction is a 2'-deoxycytidine in DNA + S-adenosyl-L-methionine = a 5-methyl-2'-deoxycytidine in DNA + S-adenosyl-L-homocysteine + H(+). Its function is as follows. Involved in the CpXpG methylation (e.g. CHG cytosine) and in gene silencing. Methylates preferentially transposon-related sequences. Functionally redundant to DRM1/DRM2 to maintain non-CpG methylation. Involved in RNA-directed DNA methylation. The protein is DNA (cytosine-5)-methyltransferase CMT3 of Arabidopsis thaliana (Mouse-ear cress).